A 206-amino-acid polypeptide reads, in one-letter code: Small ribosomal subunit protein uS4 (206 aa).

The S4 RNA-binding domain occupies 96 to 157 (GRLDNVVYRM…KAKKQSRVRA (62 aa)).

This sequence belongs to the universal ribosomal protein uS4 family. In terms of assembly, part of the 30S ribosomal subunit. Contacts protein S5. The interaction surface between S4 and S5 is involved in control of translational fidelity.

One of the primary rRNA binding proteins, it binds directly to 16S rRNA where it nucleates assembly of the body of the 30S subunit. Functionally, with S5 and S12 plays an important role in translational accuracy. In Sodalis glossinidius (strain morsitans), this protein is Small ribosomal subunit protein uS4.